The following is a 633-amino-acid chain: Telomere-binding protein 1 (633 aa).

The disordered stretch occupies residues 253 to 272 (HAADRDDDENSSGCVHPSTS). Positions 263–272 (SSGCVHPSTS) are enriched in polar residues. The region spanning 351 to 430 (VKLTIKSFNI…LNDIGFTLEC (80 aa)) is the Ubiquitin-like domain. Residues 506-615 (PFADPNSLAL…RVLAAQAYWS (110 aa)) are sufficient for telomeric DNA binding. An HTH myb-type domain is found at 529–588 (GQRRIRRPFTVAEVELLVEAVEHLGTGRWRDVKFRAFENVHHRTYVDLKDKWKTLVHTAS). One can recognise an SANT domain in the interval 534–584 (RRPFTVAEVELLVEAVEHLGTGRWRDVKFRAFENVHHRTYVDLKDKWKTLV). Positions 557-584 (WRDVKFRAFENVHHRTYVDLKDKWKTLV) form a DNA-binding region, H-T-H motif.

Homodimer. In terms of tissue distribution, ubiquitous.

It is found in the chromosome. It localises to the telomere. Its function is as follows. Binds the telomeric double-stranded 5'TTTAGGG-3' repeat and regulates telomere length and structure. In Oryza sativa subsp. japonica (Rice), this protein is Telomere-binding protein 1 (TBP1).